The chain runs to 72 residues: Alpha-elapitoxin-Dpp2c (72 aa).

Disulfide bonds link Cys3-Cys21, Cys14-Cys42, Cys27-Cys31, Cys46-Cys57, and Cys58-Cys63.

It belongs to the three-finger toxin family. Long-chain subfamily. Type II alpha-neurotoxin sub-subfamily. As to expression, expressed by the venom gland.

It is found in the secreted. In terms of biological role, binds with high affinity to muscular (alpha-1/CHRNA1) and neuronal (alpha-7/CHRNA7) nicotinic acetylcholine receptor (nAChR) and inhibits acetylcholine from binding to the receptor, thereby impairing neuromuscular and neuronal transmission. The protein is Alpha-elapitoxin-Dpp2c of Dendroaspis polylepis polylepis (Black mamba).